A 346-amino-acid polypeptide reads, in one-letter code: UDP-3-O-acylglucosamine N-acyltransferase (346 aa).

His-240 functions as the Proton acceptor in the catalytic mechanism.

It belongs to the transferase hexapeptide repeat family. LpxD subfamily. Homotrimer.

It catalyses the reaction a UDP-3-O-[(3R)-3-hydroxyacyl]-alpha-D-glucosamine + a (3R)-hydroxyacyl-[ACP] = a UDP-2-N,3-O-bis[(3R)-3-hydroxyacyl]-alpha-D-glucosamine + holo-[ACP] + H(+). Its pathway is bacterial outer membrane biogenesis; LPS lipid A biosynthesis. In terms of biological role, catalyzes the N-acylation of UDP-3-O-acylglucosamine using 3-hydroxyacyl-ACP as the acyl donor. Is involved in the biosynthesis of lipid A, a phosphorylated glycolipid that anchors the lipopolysaccharide to the outer membrane of the cell. The protein is UDP-3-O-acylglucosamine N-acyltransferase of Bacteroides fragilis (strain YCH46).